Reading from the N-terminus, the 151-residue chain is 6,7-dimethyl-8-ribityllumazine synthase (151 aa).

5-amino-6-(D-ribitylamino)uracil contacts are provided by residues Phe23, 55–57 (AYE), and 79–81 (AVI). (2S)-2-hydroxy-3-oxobutyl phosphate is bound at residue 84–85 (AT). The Proton donor role is filled by His87. Residue Phe111 coordinates 5-amino-6-(D-ribitylamino)uracil. (2S)-2-hydroxy-3-oxobutyl phosphate is bound at residue Arg125.

The protein belongs to the DMRL synthase family.

It carries out the reaction (2S)-2-hydroxy-3-oxobutyl phosphate + 5-amino-6-(D-ribitylamino)uracil = 6,7-dimethyl-8-(1-D-ribityl)lumazine + phosphate + 2 H2O + H(+). Its pathway is cofactor biosynthesis; riboflavin biosynthesis; riboflavin from 2-hydroxy-3-oxobutyl phosphate and 5-amino-6-(D-ribitylamino)uracil: step 1/2. Its function is as follows. Catalyzes the formation of 6,7-dimethyl-8-ribityllumazine by condensation of 5-amino-6-(D-ribitylamino)uracil with 3,4-dihydroxy-2-butanone 4-phosphate. This is the penultimate step in the biosynthesis of riboflavin. This Leptospira interrogans serogroup Icterohaemorrhagiae serovar Lai (strain 56601) protein is 6,7-dimethyl-8-ribityllumazine synthase.